The chain runs to 241 residues: 1-(5-phosphoribosyl)-5-[(5-phosphoribosylamino)methylideneamino] imidazole-4-carboxamide isomerase (241 aa).

Asp-8 serves as the catalytic Proton acceptor. Catalysis depends on Asp-130, which acts as the Proton donor.

Belongs to the HisA/HisF family.

Its subcellular location is the cytoplasm. The catalysed reaction is 1-(5-phospho-beta-D-ribosyl)-5-[(5-phospho-beta-D-ribosylamino)methylideneamino]imidazole-4-carboxamide = 5-[(5-phospho-1-deoxy-D-ribulos-1-ylimino)methylamino]-1-(5-phospho-beta-D-ribosyl)imidazole-4-carboxamide. Its pathway is amino-acid biosynthesis; L-histidine biosynthesis; L-histidine from 5-phospho-alpha-D-ribose 1-diphosphate: step 4/9. This chain is 1-(5-phosphoribosyl)-5-[(5-phosphoribosylamino)methylideneamino] imidazole-4-carboxamide isomerase, found in Flavobacterium psychrophilum (strain ATCC 49511 / DSM 21280 / CIP 103535 / JIP02/86).